The primary structure comprises 609 residues: Pentatricopeptide repeat-containing protein At5g13770, chloroplastic (609 aa).

The N-terminal 44 residues, 1–44 (MAIASGSWVATVNHHANPHSFTSPTKPIFFLSQKPHNFHVCSSR), are a transit peptide targeting the chloroplast. PPR repeat units lie at residues 103–137 (ELRT…KALP), 138–168 (DGQT…FRSD), 172–207 (AVSA…GVEP), 208–242 (SPGC…RLSF), 247–281 (SGSI…GIPE), 282–316 (SSEL…KLLK), 317–351 (DPEM…ELKV), 352–386 (TDCI…ECEA), 387–421 (GQVT…GFDK), 422–456 (CVVA…GCKP), 457–491 (NIWI…KVLP), 492–526 (DKVS…RGKI), and 527–561 (DRAM…GTRL).

The protein belongs to the PPR family. P subfamily.

The protein resides in the plastid. It localises to the chloroplast. In Arabidopsis thaliana (Mouse-ear cress), this protein is Pentatricopeptide repeat-containing protein At5g13770, chloroplastic.